Consider the following 270-residue polypeptide: Myeloid leukemia factor 1 (270 aa).

A phosphoserine mark is found at Ser6, Ser8, Ser32, and Ser34. The interval 50–125 (RARNRMGHED…VGDEPPKVFQ (76 aa)) is interaction with COPS3. Disordered stretches follow at residues 127 to 148 (STQT…RDSD) and 221 to 247 (RSVA…AIEH). Positions 138–148 (KETRKALRDSD) are enriched in basic and acidic residues.

Belongs to the MLF family. As to quaternary structure, interacts with CENPU. Also interacts with NRBP1/MADM, YWHAZ/14-3-3-zeta and HNRPUL2/MANP. NRBP1 recruits a serine kinase which phosphorylates both itself and MLF1. Phosphorylated MLF1 then binds to YWHAZ and is retained in the cytoplasm. Retained in the nucleus by binding to HNRPUL2. Binds to COPS3/CSN3 which is required for suppression of COP1 and activation of p53. In terms of processing, phosphorylation is required for binding to YWHAZ.

The protein localises to the cytoplasm. Its subcellular location is the nucleus. It localises to the cell projection. It is found in the cilium. The protein resides in the cytoskeleton. The protein localises to the cilium basal body. Functionally, involved in lineage commitment of primary hemopoietic progenitors by restricting erythroid formation and enhancing myeloid formation. Interferes with erythropoietin-induced erythroid terminal differentiation by preventing cells from exiting the cell cycle through suppression of CDKN1B/p27Kip1 levels. Suppresses COP1 activity via CSN3 which activates p53 and induces cell cycle arrest. Binds DNA and affects the expression of a number of genes so may function as a transcription factor in the nucleus. The protein is Myeloid leukemia factor 1 (MLF1) of Bos taurus (Bovine).